The primary structure comprises 337 residues: DNA-directed RNA polymerase subunit alpha (337 aa).

Residues 1 to 233 are alpha N-terminal domain (alpha-NTD); that stretch reads MIQKNWQELI…DQLSIFVNFE (233 aa). Residues 249 to 337 form an alpha C-terminal domain (alpha-CTD) region; the sequence is FNPALLKKVD…DLAKRYEDQY (89 aa).

This sequence belongs to the RNA polymerase alpha chain family. As to quaternary structure, homodimer. The RNAP catalytic core consists of 2 alpha, 1 beta, 1 beta' and 1 omega subunit. When a sigma factor is associated with the core the holoenzyme is formed, which can initiate transcription.

It catalyses the reaction RNA(n) + a ribonucleoside 5'-triphosphate = RNA(n+1) + diphosphate. Its function is as follows. DNA-dependent RNA polymerase catalyzes the transcription of DNA into RNA using the four ribonucleoside triphosphates as substrates. This Brucella ovis (strain ATCC 25840 / 63/290 / NCTC 10512) protein is DNA-directed RNA polymerase subunit alpha.